The following is a 96-amino-acid chain: Aspartyl/glutamyl-tRNA(Asn/Gln) amidotransferase subunit C (96 aa).

This sequence belongs to the GatC family. In terms of assembly, heterotrimer of A, B and C subunits.

It catalyses the reaction L-glutamyl-tRNA(Gln) + L-glutamine + ATP + H2O = L-glutaminyl-tRNA(Gln) + L-glutamate + ADP + phosphate + H(+). The catalysed reaction is L-aspartyl-tRNA(Asn) + L-glutamine + ATP + H2O = L-asparaginyl-tRNA(Asn) + L-glutamate + ADP + phosphate + 2 H(+). In terms of biological role, allows the formation of correctly charged Asn-tRNA(Asn) or Gln-tRNA(Gln) through the transamidation of misacylated Asp-tRNA(Asn) or Glu-tRNA(Gln) in organisms which lack either or both of asparaginyl-tRNA or glutaminyl-tRNA synthetases. The reaction takes place in the presence of glutamine and ATP through an activated phospho-Asp-tRNA(Asn) or phospho-Glu-tRNA(Gln). The protein is Aspartyl/glutamyl-tRNA(Asn/Gln) amidotransferase subunit C of Chloroflexus aggregans (strain MD-66 / DSM 9485).